The following is an 87-amino-acid chain: DNA polymerase epsilon subunit C (87 aa).

In terms of assembly, DNA polymerase epsilon is a heterotetramer consisting of cdc20/Pol2, dpb2, dpb3, and dpb4. Also forms a heterodimer consisting dpb3 and dpb4. Interacts directly with cdc20/pol2 and dpb4.

Its subcellular location is the nucleus. In terms of biological role, as accessory component of the DNA polymerase epsilon (DNA polymerase II) participates in chromosomal DNA replication. It is required during synthesis of the leading and lagging DNA strands at the replication fork and binds at/or near replication origins and moves along DNA with the replication fork. It has 3'-5' proofreading exonuclease activity that correct errors arising during DNA replication. It is also involved in DNA synthesis during DNA repair. The dpb3-dpb4 dimer associates with histone deacetylases, chromatin remodelers, and histones and plays a crucial role in the inheritance of histone hypoacetylation and H3K9 methylation in heterochromatin. The dpb3-dpb4 dimer is also required for the recruitment of sir2 to heterochromatin. The polypeptide is DNA polymerase epsilon subunit C (Schizosaccharomyces pombe (strain 972 / ATCC 24843) (Fission yeast)).